Reading from the N-terminus, the 138-residue chain is Sec-independent protein translocase protein TatB (138 aa).

Residues 1–21 (MFDIGFSELLLIAVVALVVLG) traverse the membrane as a helical segment. The tract at residues 116 to 138 (VHHVHVPPPSTSTHGNNGQEKSQ) is disordered. Over residues 126 to 138 (TSTHGNNGQEKSQ) the composition is skewed to polar residues.

The protein belongs to the TatB family. As to quaternary structure, the Tat system comprises two distinct complexes: a TatABC complex, containing multiple copies of TatA, TatB and TatC subunits, and a separate TatA complex, containing only TatA subunits. Substrates initially bind to the TatABC complex, which probably triggers association of the separate TatA complex to form the active translocon.

The protein resides in the cell inner membrane. Part of the twin-arginine translocation (Tat) system that transports large folded proteins containing a characteristic twin-arginine motif in their signal peptide across membranes. Together with TatC, TatB is part of a receptor directly interacting with Tat signal peptides. TatB may form an oligomeric binding site that transiently accommodates folded Tat precursor proteins before their translocation. This Xylella fastidiosa (strain Temecula1 / ATCC 700964) protein is Sec-independent protein translocase protein TatB.